The primary structure comprises 286 residues: Acetyl-coenzyme A carboxylase carboxyl transferase subunit beta (286 aa).

Residues 26 to 286 (LWEKCVKCDA…LAKFTRRAAV (261 aa)) form the CoA carboxyltransferase N-terminal domain. Zn(2+)-binding residues include Cys30, Cys33, Cys49, and Cys52. The C4-type zinc finger occupies 30–52 (CVKCDAVLYKPELEKNLDVCPKC).

This sequence belongs to the AccD/PCCB family. In terms of assembly, acetyl-CoA carboxylase is a heterohexamer composed of biotin carboxyl carrier protein (AccB), biotin carboxylase (AccC) and two subunits each of ACCase subunit alpha (AccA) and ACCase subunit beta (AccD). It depends on Zn(2+) as a cofactor.

It localises to the cytoplasm. It carries out the reaction N(6)-carboxybiotinyl-L-lysyl-[protein] + acetyl-CoA = N(6)-biotinyl-L-lysyl-[protein] + malonyl-CoA. Its pathway is lipid metabolism; malonyl-CoA biosynthesis; malonyl-CoA from acetyl-CoA: step 1/1. In terms of biological role, component of the acetyl coenzyme A carboxylase (ACC) complex. Biotin carboxylase (BC) catalyzes the carboxylation of biotin on its carrier protein (BCCP) and then the CO(2) group is transferred by the transcarboxylase to acetyl-CoA to form malonyl-CoA. This is Acetyl-coenzyme A carboxylase carboxyl transferase subunit beta from Cellvibrio japonicus (strain Ueda107) (Pseudomonas fluorescens subsp. cellulosa).